The following is a 546-amino-acid chain: Cysteine--tRNA ligase (546 aa).

Position 57 (Cys-57) interacts with Zn(2+). Residues 59–69 (ATVQSSPHIGH) carry the 'HIGH' region motif. Positions 211–236 (PSVDATGADKYNPVDPADASPDKHDP) are disordered. Zn(2+)-binding residues include Cys-270, His-295, and Glu-299. Positions 326–330 (KMSKS) match the 'KMSKS' region motif. Lys-329 lines the ATP pocket.

The protein belongs to the class-I aminoacyl-tRNA synthetase family. In terms of assembly, monomer. Zn(2+) serves as cofactor.

It localises to the cytoplasm. It carries out the reaction tRNA(Cys) + L-cysteine + ATP = L-cysteinyl-tRNA(Cys) + AMP + diphosphate. This chain is Cysteine--tRNA ligase, found in Bifidobacterium longum (strain NCC 2705).